A 124-amino-acid polypeptide reads, in one-letter code: 14 kDa phosphohistidine phosphatase (124 aa).

Position 20 (Lys20) interacts with substrate. The Proton acceptor role is filled by His52. 93–95 (SMG) serves as a coordination point for substrate.

This sequence belongs to the janus family. In terms of assembly, monomer.

The protein resides in the cytoplasm. The enzyme catalyses N(pros)-phospho-L-histidyl-[protein] + H2O = L-histidyl-[protein] + phosphate. It carries out the reaction N(tele)-phospho-L-histidyl-[protein] + H2O = L-histidyl-[protein] + phosphate. Exhibits phosphohistidine phosphatase activity. In Mus musculus (Mouse), this protein is 14 kDa phosphohistidine phosphatase (Phpt1).